The sequence spans 455 residues: Ribulose bisphosphate carboxylase large chain (455 aa).

The residue at position 5 (lysine 5) is an N6,N6,N6-trimethyllysine. Substrate-binding residues include asparagine 114 and threonine 164. Lysine 166 acts as the Proton acceptor in catalysis. Position 168 (lysine 168) interacts with substrate. Lysine 192, aspartate 194, and glutamate 195 together coordinate Mg(2+). Lysine 192 bears the N6-carboxylysine mark. Histidine 285 serves as the catalytic Proton acceptor. 3 residues coordinate substrate: arginine 286, histidine 318, and serine 370.

This sequence belongs to the RuBisCO large chain family. Type I subfamily. Heterohexadecamer of 8 large chains and 8 small chains; disulfide-linked. The disulfide link is formed within the large subunit homodimers. It depends on Mg(2+) as a cofactor. The disulfide bond which can form in the large chain dimeric partners within the hexadecamer appears to be associated with oxidative stress and protein turnover.

It localises to the plastid. Its subcellular location is the chloroplast. The enzyme catalyses 2 (2R)-3-phosphoglycerate + 2 H(+) = D-ribulose 1,5-bisphosphate + CO2 + H2O. It catalyses the reaction D-ribulose 1,5-bisphosphate + O2 = 2-phosphoglycolate + (2R)-3-phosphoglycerate + 2 H(+). Functionally, ruBisCO catalyzes two reactions: the carboxylation of D-ribulose 1,5-bisphosphate, the primary event in carbon dioxide fixation, as well as the oxidative fragmentation of the pentose substrate in the photorespiration process. Both reactions occur simultaneously and in competition at the same active site. The polypeptide is Ribulose bisphosphate carboxylase large chain (Erythrina crista-galli (Cockspur coral tree)).